Reading from the N-terminus, the 348-residue chain is UDP-glucose 4-epimerase (348 aa).

Residues 12 to 14 (GYI), 33 to 37 (DNFHN), 66 to 67 (DI), F88, and K92 contribute to the NAD(+) site. Residue 132–134 (SAT) participates in substrate binding. Y157 acts as the Proton acceptor in catalysis. NAD(+) is bound by residues K161 and Y185. Residues 185 to 187 (YFN), 206 to 208 (NNL), 224 to 226 (NVF), R239, and 300 to 303 (REGD) contribute to the substrate site.

It belongs to the NAD(P)-dependent epimerase/dehydratase family. In terms of assembly, homodimer. NAD(+) serves as cofactor.

The enzyme catalyses UDP-alpha-D-glucose = UDP-alpha-D-galactose. It catalyses the reaction UDP-N-acetyl-alpha-D-glucosamine = UDP-N-acetyl-alpha-D-galactosamine. It participates in carbohydrate metabolism; galactose metabolism. In terms of biological role, catalyzes two distinct but analogous reactions: the reversible epimerization of UDP-glucose to UDP-galactose and the reversible epimerization of UDP-N-acetylglucosamine to UDP-N-acetylgalactosamine. The reaction with UDP-Gal plays a critical role in the Leloir pathway of galactose catabolism in which galactose is converted to the glycolytic intermediate glucose 6-phosphate. It contributes to the catabolism of dietary galactose and enables the endogenous biosynthesis of both UDP-Gal and UDP-GalNAc when exogenous sources are limited. Both UDP-sugar interconversions are important in the synthesis of glycoproteins and glycolipids. The sequence is that of UDP-glucose 4-epimerase from Homo sapiens (Human).